The chain runs to 559 residues: Branched-chain-amino-acid aminotransferase-like protein 2 (559 aa).

The protein belongs to the class-IV pyridoxal-phosphate-dependent aminotransferase family.

The polypeptide is Branched-chain-amino-acid aminotransferase-like protein 2 (Arabidopsis thaliana (Mouse-ear cress)).